The chain runs to 466 residues: Peptidoglycan-N-acetylglucosamine deacetylase PgdA (466 aa).

Residues 1 to 5 are Cytoplasmic-facing; the sequence is MKIRW. A helical membrane pass occupies residues 6–26; it reads IRLSLVAILIIAVVFIGVIGF. Residues 27 to 466 are Extracellular-facing; it reads QKYQFSKSRN…FDKTDSRMVK (440 aa). The NodB homology domain occupies 266 to 440; that stretch reads KRIALTFDDG…KLKSQGYEFV (175 aa). The Proton acceptor role is filled by Asp-273. Zn(2+) is bound by residues Asp-274, His-324, and His-328. Residue Tyr-365 coordinates substrate. The Proton donor role is filled by His-415.

Homodimer. Interacts (via transmembrane domain) with PbpA1 (via transmembrane domain); the interaction is important for the peptidoglycan N-deacetylase function of this protein. It depends on Zn(2+) as a cofactor.

It is found in the cell membrane. Its subcellular location is the secreted. It localises to the cell wall. It catalyses the reaction peptidoglycan-N-acetyl-D-glucosamine + H2O = peptidoglycan-D-glucosamine + acetate.. Catalyzes the deacetylation of N-acetylglucosamine (GlcNAc) residues in peptidoglycan (PG). Also deacetylates N-acetylated PG. Does not deacetylate N-acetylmuramic acid. Confers host lysozyme resistance. Critical for virulence and escape from innate immune response of the host. Required for intracellular survival of bacteria in macrophages of the host. Required for successful host colonization. Controls the production of inflammatory mediators in the bone marrow derived macrophages (BMMs) of the infected mouse. Suppresses Toll-like receptor 2 (TLR2)-dependent secretion of interleukin 6 (IL-6) and interferon-beta (IFN-beta) in the macrophages of the infected mouse. May decrease accessibility of pattern recognition receptors (PRRs) such as nucleotide-binding oligomerization domain protein (NOD) 1 of the host to the bacterial cell wall components. Protects cells from autolysis induced by lysozyme or by other autolysis-inducing agents. This is Peptidoglycan-N-acetylglucosamine deacetylase PgdA from Listeria monocytogenes serotype 1/2a (strain 10403S).